We begin with the raw amino-acid sequence, 684 residues long: TBC1 domain family member 23 (684 aa).

The region spanning 44-225 (PLPAELRAKV…AIWDGYLQQA (182 aa)) is the Rab-GAP TBC domain. Serine 300 is modified (phosphoserine). In terms of domain architecture, Rhodanese spans 334–446 (EGVRFFVVDC…LQQHLADINV (113 aa)). Phosphoserine occurs at positions 469, 474, and 507. Residue threonine 514 is modified to Phosphothreonine. The interval 514 to 558 (TPVDRHVSSSDRVGKPYRGVKPVFSIGDEEEYDTDEIDSSSMSDD) is may mediate the interaction with C17orf75, FAM91A1 and WDR11. A may mediate the interaction with WASHC1 region spans residues 514–684 (TPVDRHVSSS…IMKVLDALES (171 aa)). Serine 556 carries the post-translational modification Phosphoserine. The segment at 559–684 (DRKEVVNIQT…IMKVLDALES (126 aa)) is may mediate the interaction with FKBP15 and WASHC2; required for endosome to Golgi trafficking.

In terms of assembly, directly interacts with GOLGA1 and GOLGA4. Interacts with FAM91A1, C17ORF75 and WDR11; the interaction recruits TBC1D23 to AP-1-derived vesicles. Directly interacts with WASHC1 and WASHC2/FAM21. Interacts with FKBP15.

It localises to the golgi apparatus. The protein localises to the trans-Golgi network. The protein resides in the cytoplasmic vesicle. Putative Rab GTPase-activating protein which plays a role in vesicular trafficking. Involved in endosome-to-Golgi trafficking. Acts as a bridging protein by binding simultaneously to golgins, including GOLGA1 and GOLGA4, located at the trans-Golgi, and to the WASH complex, located on endosome-derived vesicles. Together with WDR11 complex facilitates the golgin-mediated capture of vesicles generated using AP-1. Plays a role in brain development, including in cortical neuron positioning. May also be important for neurite outgrowth, possibly through its involvement in membrane trafficking and cargo delivery, 2 processes which are essential for axonal and dendritic growth. May act as a general inhibitor of innate immunity signaling, strongly inhibiting multiple TLR and dectin/CLEC7A-signaling pathways. Does not alter initial activation events, but instead affects maintenance of inflammatory gene expression several hours after bacterial lipopolysaccharide (LPS) challenge. This is TBC1 domain family member 23 (Tbc1d23) from Mus musculus (Mouse).